The primary structure comprises 505 residues: 2,3-bisphosphoglycerate-independent phosphoglycerate mutase (505 aa).

The Mn(2+) site is built by Asp-11 and Ser-61. The Phosphoserine intermediate role is filled by Ser-61. Substrate is bound by residues His-122, 152–153 (RD), Arg-183, Arg-189, 259–262 (RTDR), and Lys-332. Mn(2+) is bound by residues Asp-399, His-403, Asp-440, His-441, and His-458.

The protein belongs to the BPG-independent phosphoglycerate mutase family. Monomer. Requires Mn(2+) as cofactor.

The catalysed reaction is (2R)-2-phosphoglycerate = (2R)-3-phosphoglycerate. The protein operates within carbohydrate degradation; glycolysis; pyruvate from D-glyceraldehyde 3-phosphate: step 3/5. Functionally, catalyzes the interconversion of 2-phosphoglycerate and 3-phosphoglycerate. This is 2,3-bisphosphoglycerate-independent phosphoglycerate mutase from Flavobacterium psychrophilum (strain ATCC 49511 / DSM 21280 / CIP 103535 / JIP02/86).